The following is a 360-amino-acid chain: Tryptophan--tRNA ligase, mitochondrial (360 aa).

ATP contacts are provided by residues Gln-38 and 44-47 (HLGN). Residues 39–47 (PTGIPHLGN) carry the 'HIGH' region motif. L-tryptophan is bound at residue Asp-168. ATP contacts are provided by residues 180–182 (GED) and 229–233 (KMSKS). Over residues 220 to 230 (IRSLREPEKKM) the composition is skewed to basic and acidic residues. The segment at 220–241 (IRSLREPEKKMSKSSGGPRSRI) is disordered. Residues 229–233 (KMSKS) carry the 'KMSKS' region motif.

The protein belongs to the class-I aminoacyl-tRNA synthetase family.

It localises to the mitochondrion matrix. It carries out the reaction tRNA(Trp) + L-tryptophan + ATP = L-tryptophyl-tRNA(Trp) + AMP + diphosphate + H(+). Functionally, catalyzes the attachment of tryptophan to tRNA(Trp). This is Tryptophan--tRNA ligase, mitochondrial from Caenorhabditis elegans.